The sequence spans 353 residues: D-alanine--D-alanine ligase (353 aa).

The region spanning 141–349 is the ATP-grasp domain; that stretch reads KAAFAAAGLP…LEELVSQLVI (209 aa). Residue 176-231 coordinates ATP; sequence EAKLKYPCFVKPANLGSSVGISKAQNRNELLIGLDKAASLDRRIVVEQGVSARELE. The Mg(2+) site is built by aspartate 302, glutamate 316, and asparagine 318.

The protein belongs to the D-alanine--D-alanine ligase family. It depends on Mg(2+) as a cofactor. Requires Mn(2+) as cofactor.

The protein localises to the cytoplasm. It catalyses the reaction 2 D-alanine + ATP = D-alanyl-D-alanine + ADP + phosphate + H(+). It functions in the pathway cell wall biogenesis; peptidoglycan biosynthesis. Functionally, cell wall formation. This chain is D-alanine--D-alanine ligase, found in Prochlorococcus marinus (strain MIT 9313).